The following is a 1534-amino-acid chain: DNA-directed RNA polymerase subunit beta'' (1534 aa).

Cys220, Cys296, Cys303, and Cys306 together coordinate Zn(2+). Composition is skewed to basic and acidic residues over residues 644-668 (RTQE…RTRE) and 678-688 (PENKYRTREGE). Disordered stretches follow at residues 644-698 (RTQE…EDEY) and 719-800 (YRTL…KKEG). 2 stretches are compositionally biased toward acidic residues: residues 744–762 (GEYE…SSED) and 770–789 (TLEE…EYGS).

This sequence belongs to the RNA polymerase beta' chain family. RpoC2 subfamily. As to quaternary structure, in plastids the minimal PEP RNA polymerase catalytic core is composed of four subunits: alpha, beta, beta', and beta''. When a (nuclear-encoded) sigma factor is associated with the core the holoenzyme is formed, which can initiate transcription. The cofactor is Zn(2+).

It is found in the plastid. It localises to the chloroplast. The catalysed reaction is RNA(n) + a ribonucleoside 5'-triphosphate = RNA(n+1) + diphosphate. Functionally, DNA-dependent RNA polymerase catalyzes the transcription of DNA into RNA using the four ribonucleoside triphosphates as substrates. This Saccharum officinarum (Sugarcane) protein is DNA-directed RNA polymerase subunit beta''.